The primary structure comprises 374 residues: 5-pentadecatrienyl resorcinol O-methyltransferase (374 aa).

Residues Asp239, Asp261, Met262, and Lys275 each contribute to the S-adenosyl-L-methionine site. The active-site Proton acceptor is His279.

Belongs to the class I-like SAM-binding methyltransferase superfamily. Cation-independent O-methyltransferase family. COMT subfamily. In terms of assembly, homodimer. Expressed predominantly in root hairs.

The catalysed reaction is (8Z,11Z)-5-(pentadeca-8,11,14-trien-1-yl)resorcinol + S-adenosyl-L-methionine = (8Z,11Z)-5-(pentadeca- 8,11,14-trien-1-yl)resorcinol-3-methyl ether + S-adenosyl-L-homocysteine + H(+). O-methyltransferase involved in the biosynthetic pathway of the phytotoxin sorgoleone, a potent broad-spectrum inhibitor active against many agronomically important monocot and dicot weed species. Substrate specificity for alkylresorcinols. Strong preference for a five carbons alkyl side chain. This is 5-pentadecatrienyl resorcinol O-methyltransferase (OMT3) from Sorghum bicolor (Sorghum).